The chain runs to 144 residues: Large ribosomal subunit protein uL16 (144 aa).

Belongs to the universal ribosomal protein uL16 family. In terms of assembly, part of the 50S ribosomal subunit.

Its function is as follows. Binds 23S rRNA and is also seen to make contacts with the A and possibly P site tRNAs. The polypeptide is Large ribosomal subunit protein uL16 (Clostridium beijerinckii (strain ATCC 51743 / NCIMB 8052) (Clostridium acetobutylicum)).